A 486-amino-acid polypeptide reads, in one-letter code: ATP synthase subunit beta (486 aa).

167 to 174 (GGAGVGKT) provides a ligand contact to ATP.

The protein belongs to the ATPase alpha/beta chains family. F-type ATPases have 2 components, CF(1) - the catalytic core - and CF(0) - the membrane proton channel. CF(1) has five subunits: alpha(3), beta(3), gamma(1), delta(1), epsilon(1). CF(0) has three main subunits: a(1), b(2) and c(9-12). The alpha and beta chains form an alternating ring which encloses part of the gamma chain. CF(1) is attached to CF(0) by a central stalk formed by the gamma and epsilon chains, while a peripheral stalk is formed by the delta and b chains.

It localises to the cell inner membrane. It catalyses the reaction ATP + H2O + 4 H(+)(in) = ADP + phosphate + 5 H(+)(out). Functionally, produces ATP from ADP in the presence of a proton gradient across the membrane. The catalytic sites are hosted primarily by the beta subunits. The polypeptide is ATP synthase subunit beta (Anaplasma marginale (strain St. Maries)).